Reading from the N-terminus, the 238-residue chain is tRNA (guanine-N(7)-)-methyltransferase (238 aa).

Residues Glu68, Glu93, Asp120, and Asp143 each coordinate S-adenosyl-L-methionine. Asp143 is a catalytic residue. Residues Lys147, Asp179, and 216–219 (TKFE) contribute to the substrate site.

Belongs to the class I-like SAM-binding methyltransferase superfamily. TrmB family.

The enzyme catalyses guanosine(46) in tRNA + S-adenosyl-L-methionine = N(7)-methylguanosine(46) in tRNA + S-adenosyl-L-homocysteine. It participates in tRNA modification; N(7)-methylguanine-tRNA biosynthesis. Catalyzes the formation of N(7)-methylguanine at position 46 (m7G46) in tRNA. This Shewanella baltica (strain OS155 / ATCC BAA-1091) protein is tRNA (guanine-N(7)-)-methyltransferase.